The following is a 202-amino-acid chain: Outer-membrane lipoprotein carrier protein (202 aa).

A signal peptide spans 1 to 18 (MNKLFLILLLIFSHEVFS).

The protein belongs to the LolA family. In terms of assembly, monomer.

Its subcellular location is the periplasm. Participates in the translocation of lipoproteins from the inner membrane to the outer membrane. Only forms a complex with a lipoprotein if the residue after the N-terminal Cys is not an aspartate (The Asp acts as a targeting signal to indicate that the lipoprotein should stay in the inner membrane). In Legionella pneumophila (strain Corby), this protein is Outer-membrane lipoprotein carrier protein.